A 428-amino-acid polypeptide reads, in one-letter code: Tyrosine--tRNA ligase (428 aa).

Y37 serves as a coordination point for L-tyrosine. The short motif at 42 to 51 (PTGSSLHAGH) is the 'HIGH' region element. L-tyrosine-binding residues include Y175 and Q179. The short motif at 235–239 (KFGKS) is the 'KMSKS' region element. K238 serves as a coordination point for ATP. One can recognise an S4 RNA-binding domain in the interval 358 to 415 (ATILDLLVESGLEKSKGAARRTVGEGGAYVNNQRIEDIEWSPSAEELLHGSWLVLRKG).

This sequence belongs to the class-I aminoacyl-tRNA synthetase family. TyrS type 1 subfamily. Homodimer.

The protein localises to the cytoplasm. The enzyme catalyses tRNA(Tyr) + L-tyrosine + ATP = L-tyrosyl-tRNA(Tyr) + AMP + diphosphate + H(+). Catalyzes the attachment of tyrosine to tRNA(Tyr) in a two-step reaction: tyrosine is first activated by ATP to form Tyr-AMP and then transferred to the acceptor end of tRNA(Tyr). The polypeptide is Tyrosine--tRNA ligase (Corynebacterium jeikeium (strain K411)).